The primary structure comprises 201 residues: Ribosome maturation factor RimP (201 aa).

This sequence belongs to the RimP family.

It localises to the cytoplasm. Required for maturation of 30S ribosomal subunits. The sequence is that of Ribosome maturation factor RimP from Rhizobium leguminosarum bv. trifolii (strain WSM2304).